A 162-amino-acid chain; its full sequence is Ribonuclease H (162 aa).

An RNase H type-1 domain is found at M1 to A141. 4 residues coordinate Mg(2+): D9, E47, D69, and D133. Positions G139–R162 are disordered.

It belongs to the RNase H family. As to quaternary structure, monomer. Mg(2+) serves as cofactor.

The protein resides in the cytoplasm. The enzyme catalyses Endonucleolytic cleavage to 5'-phosphomonoester.. Its function is as follows. Endonuclease that specifically degrades the RNA of RNA-DNA hybrids. The protein is Ribonuclease H of Chelativorans sp. (strain BNC1).